A 778-amino-acid chain; its full sequence is Endonuclease MutS2 (778 aa).

328 to 335 serves as a coordination point for ATP; the sequence is GPNTGGKT. A Smr domain is found at 702 to 777; that stretch reads LDLRGKRYEE…GSGATIVTFK (76 aa).

This sequence belongs to the DNA mismatch repair MutS family. MutS2 subfamily. As to quaternary structure, homodimer. Binds to stalled ribosomes, contacting rRNA.

Endonuclease that is involved in the suppression of homologous recombination and thus may have a key role in the control of bacterial genetic diversity. Its function is as follows. Acts as a ribosome collision sensor, splitting the ribosome into its 2 subunits. Detects stalled/collided 70S ribosomes which it binds and splits by an ATP-hydrolysis driven conformational change. Acts upstream of the ribosome quality control system (RQC), a ribosome-associated complex that mediates the extraction of incompletely synthesized nascent chains from stalled ribosomes and their subsequent degradation. Probably generates substrates for RQC. This Streptococcus pneumoniae (strain 70585) protein is Endonuclease MutS2.